The primary structure comprises 105 residues: Heat shock protein HspQ (105 aa).

The tract at residues 80-105 (AHPEQPSLDELAASIRHQLQAPHLRN) is disordered.

This sequence belongs to the HspQ family.

The protein localises to the cytoplasm. In terms of biological role, involved in the degradation of certain denaturated proteins, including DnaA, during heat shock stress. The polypeptide is Heat shock protein HspQ (Yersinia pseudotuberculosis serotype O:1b (strain IP 31758)).